The sequence spans 143 residues: Large ribosomal subunit protein uL13 (143 aa).

Belongs to the universal ribosomal protein uL13 family. As to quaternary structure, part of the 50S ribosomal subunit.

Its function is as follows. This protein is one of the early assembly proteins of the 50S ribosomal subunit, although it is not seen to bind rRNA by itself. It is important during the early stages of 50S assembly. The sequence is that of Large ribosomal subunit protein uL13 from Prochlorococcus marinus (strain MIT 9301).